A 488-amino-acid polypeptide reads, in one-letter code: Membrane-bound lytic murein transglycosylase F (488 aa).

The N-terminal stretch at 1 to 25 is a signal peptide; it reads MFARPAIRMRCATGLLAIGTLLMLA. The tract at residues 26-269 is non-LT domain; it reads GCGEEPKPSV…RLKERYYGHV (244 aa). The segment at 270–488 is LT domain; it reads DVLGYVGAYT…RTLDEQTPPL (219 aa). Residue Glu316 is part of the active site.

This sequence in the N-terminal section; belongs to the bacterial solute-binding protein 3 family. It in the C-terminal section; belongs to the transglycosylase Slt family.

It is found in the cell outer membrane. The catalysed reaction is Exolytic cleavage of the (1-&gt;4)-beta-glycosidic linkage between N-acetylmuramic acid (MurNAc) and N-acetylglucosamine (GlcNAc) residues in peptidoglycan, from either the reducing or the non-reducing ends of the peptidoglycan chains, with concomitant formation of a 1,6-anhydrobond in the MurNAc residue.. Its function is as follows. Murein-degrading enzyme that degrades murein glycan strands and insoluble, high-molecular weight murein sacculi, with the concomitant formation of a 1,6-anhydromuramoyl product. Lytic transglycosylases (LTs) play an integral role in the metabolism of the peptidoglycan (PG) sacculus. Their lytic action creates space within the PG sacculus to allow for its expansion as well as for the insertion of various structures such as secretion systems and flagella. In Ectopseudomonas mendocina (strain ymp) (Pseudomonas mendocina), this protein is Membrane-bound lytic murein transglycosylase F.